A 957-amino-acid polypeptide reads, in one-letter code: Bifunctional glutamine synthetase adenylyltransferase/adenylyl-removing enzyme (957 aa).

Residues 1–449 are adenylyl removase; the sequence is MTQHLERPEL…VFDDIIGTDE (449 aa). Positions 457 to 957 are adenylyl transferase; sequence SEQYNEMWTM…QEYLVPSSDE (501 aa).

Belongs to the GlnE family. Requires Mg(2+) as cofactor.

It catalyses the reaction [glutamine synthetase]-O(4)-(5'-adenylyl)-L-tyrosine + phosphate = [glutamine synthetase]-L-tyrosine + ADP. It carries out the reaction [glutamine synthetase]-L-tyrosine + ATP = [glutamine synthetase]-O(4)-(5'-adenylyl)-L-tyrosine + diphosphate. Its function is as follows. Involved in the regulation of glutamine synthetase GlnA, a key enzyme in the process to assimilate ammonia. When cellular nitrogen levels are high, the C-terminal adenylyl transferase (AT) inactivates GlnA by covalent transfer of an adenylyl group from ATP to specific tyrosine residue of GlnA, thus reducing its activity. Conversely, when nitrogen levels are low, the N-terminal adenylyl removase (AR) activates GlnA by removing the adenylyl group by phosphorolysis, increasing its activity. The regulatory region of GlnE binds the signal transduction protein PII (GlnB) which indicates the nitrogen status of the cell. This Photobacterium profundum (strain SS9) protein is Bifunctional glutamine synthetase adenylyltransferase/adenylyl-removing enzyme.